Here is a 334-residue protein sequence, read N- to C-terminus: Phosphoribosylformylglycinamidine cyclo-ligase (334 aa).

The protein belongs to the AIR synthase family.

The protein resides in the cytoplasm. The enzyme catalyses 2-formamido-N(1)-(5-O-phospho-beta-D-ribosyl)acetamidine + ATP = 5-amino-1-(5-phospho-beta-D-ribosyl)imidazole + ADP + phosphate + H(+). It functions in the pathway purine metabolism; IMP biosynthesis via de novo pathway; 5-amino-1-(5-phospho-D-ribosyl)imidazole from N(2)-formyl-N(1)-(5-phospho-D-ribosyl)glycinamide: step 2/2. This Thermococcus kodakarensis (strain ATCC BAA-918 / JCM 12380 / KOD1) (Pyrococcus kodakaraensis (strain KOD1)) protein is Phosphoribosylformylglycinamidine cyclo-ligase.